Reading from the N-terminus, the 327-residue chain is T-cell surface glycoprotein CD1a (327 aa).

The signal sequence occupies residues 1-16 (MLFLLLPLLAVLPGDG). Residues 17–300 (NADGLKEPLS…VLYWEHHSSV (284 aa)) are Extracellular-facing. 3 N-linked (GlcNAc...) asparagine glycosylation sites follow: Asn37, Asn60, and Asn74. Residue 90–94 (RTIRS) participates in a D-galactosylceramide binding. 2 cysteine pairs are disulfide-bonded: Cys119–Cys183 and Cys223–Cys278. An N-linked (GlcNAc...) asparagine glycan is attached at Asn145. The a D-galactosylceramide site is built by Glu171 and Thr175. Positions 184-291 (PRFILGLLDA…HSSLEGQDIV (108 aa)) constitute an Ig-like domain. The helical transmembrane segment at 301-321 (GFIILAVIVPLLLLIGLALWF) threads the bilayer. Topologically, residues 322–327 (RKRCFC) are cytoplasmic.

In terms of assembly, heterodimer with B2M (beta-2-microglobulin). Interacts with CD74. As to expression, expressed on cortical thymocytes, epidermal Langerhans cells, dendritic cells, on certain T-cell leukemias, and in various other tissues.

It localises to the cell membrane. The protein localises to the membrane raft. The protein resides in the endosome membrane. In terms of biological role, antigen-presenting protein that binds self and non-self lipid and glycolipid antigens and presents them to T-cell receptors on natural killer T-cells. The sequence is that of T-cell surface glycoprotein CD1a (CD1A) from Homo sapiens (Human).